A 134-amino-acid chain; its full sequence is Large ribosomal subunit protein uL16c (134 aa).

It belongs to the universal ribosomal protein uL16 family. In terms of assembly, part of the 50S ribosomal subunit.

It is found in the plastid. The protein localises to the chloroplast. The protein is Large ribosomal subunit protein uL16c of Guillardia theta (Cryptophyte).